Here is a 319-residue protein sequence, read N- to C-terminus: Porphobilinogen deaminase 1 (319 aa).

Cysteine 244 is subject to S-(dipyrrolylmethanemethyl)cysteine.

This sequence belongs to the HMBS family. In terms of assembly, monomer. Dipyrromethane serves as cofactor.

The catalysed reaction is 4 porphobilinogen + H2O = hydroxymethylbilane + 4 NH4(+). The protein operates within porphyrin-containing compound metabolism; protoporphyrin-IX biosynthesis; coproporphyrinogen-III from 5-aminolevulinate: step 2/4. Functionally, tetrapolymerization of the monopyrrole PBG into the hydroxymethylbilane pre-uroporphyrinogen in several discrete steps. The chain is Porphobilinogen deaminase 1 (hemC1) from Streptomyces coelicolor (strain ATCC BAA-471 / A3(2) / M145).